A 288-amino-acid polypeptide reads, in one-letter code: Syntaxin-1A (288 aa).

Over residues 1 to 13 (MKDRTQELRTAKD) the composition is skewed to basic and acidic residues. The interval 1-20 (MKDRTQELRTAKDSDDDDDV) is disordered. The Cytoplasmic segment spans residues 1-265 (MKDRTQELRT…KYQSKARRKK (265 aa)). 3 positions are modified to phosphoserine: Ser14, Ser64, and Ser95. Positions 68-109 (DEKTKEELEELMSDIKKTANKVRSKLKSIEQSIEQEEGLNRS) form a coiled coil. Ser188 bears the Phosphoserine; by DAPK1 mark. The region spanning 192-254 (LSEIETRHSE…ERAVSDTKKA (63 aa)) is the t-SNARE coiled-coil homology domain. Glycyl lysine isopeptide (Lys-Gly) (interchain with G-Cter in SUMO) cross-links involve residues Lys252, Lys253, and Lys256. Residues 266-288 (IMIIICCVILGIIIASTIGGIFG) traverse the membrane as a helical; Anchor for type IV membrane protein segment.

Belongs to the syntaxin family. Part of the SNARE core complex containing SNAP25, VAMP2 and STX1A; this complex constitutes the basic catalytic machinery of the complex neurotransmitter release apparatus. The SNARE complex interacts with CPLX1. Interacts with STXBP1. The interaction with STXBP1 promotes assembly of the SNARE complex. Interacts (via C-terminus) with KCNB1 (via C-terminus); the interaction increases in a calcium-dependent manner and induces a pore-independent enhancement of exocytosis in neuroendocrine cells, chromaffin cells, pancreatic beta cells and from the soma of dorsal root ganglia (DRG) neurons. Interacts with SYTL4. Interacts with STXBP6. Interacts with PLCL1 (via C2 domain). Interacts with OTOF. Interacts with LGI3. Interacts (via the H3 domain) with SLC6A4 (via the N-terminus); this interaction regulates SLC4A6 channel conductance in thalamocortical neurons. Interacts with SYT6 and SYT8; the interaction is Ca(2+)-dependent. Interacts with VAMP8. Interacts with SNAP23. Interacts with VAPA and SYBU. Interacts with PRRT2. Interacts with SEPT8. Interacts with STXBP5L. Interacts with synaptotagmin-1/SYT1. Interacts with SEPTIN5; in the cerebellar cortex. Interacts with SEPTIN4; in the striatum. Phosphorylated by CK2. Phosphorylation at Ser-188 by DAPK1 significantly decreases its interaction with STXBP1. In terms of processing, (Microbial infection) Targeted and hydrolyzed by C.botulinum neurotoxin type C (BoNT/C), which hydrolyzes the 253-Lys-|-Ala-254 bond. Cleavage inhibits neurotransmitter release. Post-translationally, phosphorylated by CK2. Phosphorylation at Ser-188 by DAPK1 significantly decreases its interaction with STXBP1. Sumoylated, sumoylation is required for regulation of synaptic vesicle endocytosis. Expressed predominantly in cerebral cortex, hippocampus, cerebellum, adrenal medulla and retina with weak expression detected in non-neuronal tissues.

It localises to the cytoplasmic vesicle. The protein localises to the secretory vesicle. The protein resides in the synaptic vesicle membrane. It is found in the cell membrane. Its subcellular location is the synapse. It localises to the synaptosome. Functionally, plays an essential role in hormone and neurotransmitter calcium-dependent exocytosis and endocytosis. Part of the SNARE (Soluble NSF Attachment Receptor) complex composed of SNAP25, STX1A and VAMP2 which mediates the fusion of synaptic vesicles with the presynaptic plasma membrane. STX1A and SNAP25 are localized on the plasma membrane while VAMP2 resides in synaptic vesicles. The pairing of the three SNAREs from the N-terminal SNARE motifs to the C-terminal anchors leads to the formation of the SNARE complex, which brings membranes into close proximity and results in final fusion. Participates in the calcium-dependent regulation of acrosomal exocytosis in sperm. Also plays an important role in the exocytosis of hormones such as insulin or glucagon-like peptide 1 (GLP-1). This Rattus norvegicus (Rat) protein is Syntaxin-1A (Stx1a).